A 249-amino-acid chain; its full sequence is Aquaporin TIP4-1 (249 aa).

At M1 the chain carries N-acetylmethionine. The Cytoplasmic portion of the chain corresponds to 1–20 (MKKIELGHHSEAAKPDCIKA). K3 bears the N6,N6-dimethyllysine mark. Residues 21–41 (LIVEFITTFLFVFAGVGSAMA) form a helical membrane-spanning segment. The Vacuolar portion of the chain corresponds to 42–49 (TDSLVGNT). Residues 50–70 (LVGLFAVAVAHAFVVAVMISA) form a helical membrane-spanning segment. Over 71 to 105 (GHISGGHLNPAVTLGLLLGGHISVFRAFLYWIDQL) the chain is Cytoplasmic. Residues 79-81 (NPA) carry the NPA 1 motif. A helical membrane pass occupies residues 106–126 (LASSAACFLLSYLTGGMGTPV). The Vacuolar segment spans residues 127–137 (HTLASGVSYTQ). The chain crosses the membrane as a helical span at residues 138 to 158 (GIIWEIILTFSLLFTVYATIV). Residues 159-166 (DPKKGSLD) are Cytoplasmic-facing. Residues 167-187 (GFGPLLTGFVVGANILAGGAF) form a helical membrane-spanning segment. Residues 188 to 212 (SGASMNPARSFGPALVSGNWTDHWV) lie on the Vacuolar side of the membrane. Residues 193 to 195 (NPA) carry the NPA 2 motif. A helical membrane pass occupies residues 213–233 (YWVGPLIGGGLAGFIYENVLI). At 234–249 (DRPHVPVADDEQPLLN) the chain is on the cytoplasmic side.

Belongs to the MIP/aquaporin (TC 1.A.8) family. TIP (TC 1.A.8.10) subfamily. As to expression, expressed in roots.

The protein resides in the vacuole membrane. In terms of biological role, aquaporins facilitate the transport of water and small neutral solutes across cell membranes. Transports urea in yeast cells in a pH-independent manner. The chain is Aquaporin TIP4-1 (TIP4-1) from Arabidopsis thaliana (Mouse-ear cress).